The chain runs to 433 residues: GPI mannosyltransferase 2 (433 aa).

Met-1 is a topological domain (cytoplasmic). The helical transmembrane segment at 2-22 threads the bilayer; sequence IVGLTLYFVLFRSIQYLLVFL. Residues 23–109 lie on the Lumenal side of the membrane; it reads TPIRQFDTST…NNDSIYHALR (87 aa). N-linked (GlcNAc...) asparagine glycans are attached at residues Asn-69 and Asn-101. The helical transmembrane segment at 110–130 threads the bilayer; it reads VGVAIENVLFYLSGIVLYFLT. The Cytoplasmic portion of the chain corresponds to 131–161; the sequence is KKIFSQNIRQSQFARTIAKKTSLLFFLTSAA. A helical transmembrane segment spans residues 162 to 182; the sequence is GFLTSIYSEPLSFFFAFVGIW. The Lumenal portion of the chain corresponds to 183-215; it reads SRECSISVPVLGQFDISWRYWFPYSFISMACFT. A helical membrane pass occupies residues 216–236; sequence LASLNRSNCVLLGIYFIFDLI. The Cytoplasmic portion of the chain corresponds to 237 to 243; sequence ELTKNRK. A helical transmembrane segment spans residues 244 to 264; sequence FVKAICFPLLSGSLMFSALLY. Over 265 to 318 the chain is Lumenal; sequence QQYYLPYKTFCPQRGEWCKSQLFSSIFITKTSLYSYIQSHYWGVGLLKYWTPNN. The helical transmembrane segment at 319–339 threads the bilayer; it reads IPNFLFAVPNIIILIYSSIYF. Residues 340–350 are Cytoplasmic-facing; it reads SKIYPSYNLKA. Residues 351-371 traverse the membrane as a helical segment; it reads LVWITRALVVIVCFFAHVQIL. At 372 to 409 the chain is on the lumenal side; sequence NRIASFLPLHLWYLADRLVKTSDPKKMENPKGDDKIVK. The chain crosses the membrane as a helical span at residues 410-430; it reads FYIYWLAFWIPLQTILFAAFL. Residues 431 to 433 are Cytoplasmic-facing; sequence PPA.

The protein belongs to the PIGV family. As to quaternary structure, part of the GPI mannosyltransferase 2 complex composed of GPI18 and PGA1.

It localises to the endoplasmic reticulum membrane. The protein operates within glycolipid biosynthesis; glycosylphosphatidylinositol-anchor biosynthesis. Mannosyltransferase involved in glycosylphosphatidylinositol-anchor biosynthesis. Responsible for the transfer of the second mannose to the glycosylphosphatidylinositol during GPI precursor assembly. This is GPI mannosyltransferase 2 (GPI18) from Saccharomyces cerevisiae (strain ATCC 204508 / S288c) (Baker's yeast).